We begin with the raw amino-acid sequence, 705 residues long: DNA ligase (705 aa).

NAD(+) is bound by residues 42–46 (DADFD), 91–92 (SL), and Glu-125. Lys-127 (N6-AMP-lysine intermediate) is an active-site residue. 4 residues coordinate NAD(+): Arg-148, Glu-183, Lys-299, and Lys-323. Residues Cys-428, Cys-431, Cys-446, and Cys-452 each contribute to the Zn(2+) site. The BRCT domain maps to 626–705 (TDGSPVAGKT…DGWLALIEGL (80 aa)).

The protein belongs to the NAD-dependent DNA ligase family. LigA subfamily. Mg(2+) is required as a cofactor. Mn(2+) serves as cofactor.

It carries out the reaction NAD(+) + (deoxyribonucleotide)n-3'-hydroxyl + 5'-phospho-(deoxyribonucleotide)m = (deoxyribonucleotide)n+m + AMP + beta-nicotinamide D-nucleotide.. In terms of biological role, DNA ligase that catalyzes the formation of phosphodiester linkages between 5'-phosphoryl and 3'-hydroxyl groups in double-stranded DNA using NAD as a coenzyme and as the energy source for the reaction. It is essential for DNA replication and repair of damaged DNA. The polypeptide is DNA ligase (Roseobacter denitrificans (strain ATCC 33942 / OCh 114) (Erythrobacter sp. (strain OCh 114))).